The following is a 544-amino-acid chain: Dihydrolipoyllysine-residue acetyltransferase component of pyruvate dehydrogenase complex (544 aa).

Lipoyl-binding domains lie at 1–76 and 113–188; these read MYEF…VTID and IYDF…VLIG. N6-lipoyllysine occurs at positions 42 and 154. The region spanning 242–279 is the Peripheral subunit-binding (PSBD) domain; the sequence is LASPVARKLASDLGVDIATIKGSGEQGRVMKDDVQNSK. The active site involves H516.

It belongs to the 2-oxoacid dehydrogenase family. As to quaternary structure, forms a 24-polypeptide structural core with octahedral symmetry. The cofactor is (R)-lipoate.

It carries out the reaction N(6)-[(R)-dihydrolipoyl]-L-lysyl-[protein] + acetyl-CoA = N(6)-[(R)-S(8)-acetyldihydrolipoyl]-L-lysyl-[protein] + CoA. The pyruvate dehydrogenase complex catalyzes the overall conversion of pyruvate to acetyl-CoA and CO(2). It contains multiple copies of three enzymatic components: pyruvate dehydrogenase (E1), dihydrolipoamide acetyltransferase (E2) and lipoamide dehydrogenase (E3). The chain is Dihydrolipoyllysine-residue acetyltransferase component of pyruvate dehydrogenase complex (pdhC) from Acholeplasma laidlawii.